We begin with the raw amino-acid sequence, 512 residues long: Cytochrome P450 26B1 (512 aa).

C441 is a binding site for heme.

This sequence belongs to the cytochrome P450 family. Heme is required as a cofactor. In terms of tissue distribution, highly expressed in brain, particularly in the cerebellum and pons.

It is found in the endoplasmic reticulum membrane. Its subcellular location is the microsome membrane. The enzyme catalyses all-trans-retinoate + reduced [NADPH--hemoprotein reductase] + O2 = all-trans-4-hydroxyretinoate + oxidized [NADPH--hemoprotein reductase] + H2O + H(+). The catalysed reaction is all-trans-retinoate + reduced [NADPH--hemoprotein reductase] + O2 = all-trans-18-hydroxyretinoate + oxidized [NADPH--hemoprotein reductase] + H2O + H(+). Its function is as follows. A cytochrome P450 monooxygenase involved in the metabolism of retinoates (RAs), the active metabolites of vitamin A, and critical signaling molecules in animals. RAs exist as at least four different isomers: all-trans-RA (atRA), 9-cis-RA, 13-cis-RA, and 9,13-dicis-RA, where atRA is considered to be the biologically active isomer, although 9-cis-RA and 13-cis-RA also have activity. Catalyzes the hydroxylation of atRA primarily at C-4 and C-18, thereby contributing to the regulation of atRA homeostasis and signaling. Hydroxylation of atRA limits its biological activity and initiates a degradative process leading to its eventual elimination. Involved in the convertion of atRA to all-trans-4-oxo-RA. Can oxidize all-trans-13,14-dihydroretinoate (DRA) to metabolites which could include all-trans-4-oxo-DRA, all-trans-4-hydroxy-DRA, all-trans-5,8-epoxy-DRA, and all-trans-18-hydroxy-DRA. Shows preference for the following substrates: atRA &gt; 9-cis-RA &gt; 13-cis-RA. Plays a central role in germ cell development: acts by degrading RAs in the developing testis, preventing STRA8 expression, thereby leading to delay of meiosis. Required for the maintenance of the undifferentiated state of male germ cells during embryonic development in Sertoli cells, inducing arrest in G0 phase of the cell cycle and preventing meiotic entry. Plays a role in skeletal development, both at the level of patterning and in the ossification of bone and the establishment of some synovial joints. Essential for postnatal survival. Also has a significant activity in oxidation of tazarotenic acid and may therefore metabolize that xenobiotic in vivo. The sequence is that of Cytochrome P450 26B1 (CYP26B1) from Homo sapiens (Human).